The sequence spans 209 residues: Protein-L-isoaspartate O-methyltransferase (209 aa).

Residue Ser-59 is part of the active site.

Belongs to the methyltransferase superfamily. L-isoaspartyl/D-aspartyl protein methyltransferase family.

Its subcellular location is the cytoplasm. The catalysed reaction is [protein]-L-isoaspartate + S-adenosyl-L-methionine = [protein]-L-isoaspartate alpha-methyl ester + S-adenosyl-L-homocysteine. Its function is as follows. Catalyzes the methyl esterification of L-isoaspartyl residues in peptides and proteins that result from spontaneous decomposition of normal L-aspartyl and L-asparaginyl residues. It plays a role in the repair and/or degradation of damaged proteins. This is Protein-L-isoaspartate O-methyltransferase from Helicobacter pylori (strain P12).